We begin with the raw amino-acid sequence, 167 residues long: Insertion element IS1 4 protein InsB (167 aa).

It belongs to the transposase 27 family.

In terms of biological role, absolutely required for transposition of IS1. This chain is Insertion element IS1 4 protein InsB (insB4), found in Escherichia coli (strain K12).